The primary structure comprises 82 residues: Turripeptide Lol6.1 (82 aa).

A signal peptide spans 1-23 (MRFHWIPTLTVLLVLSMSFGTEA). A propeptide spanning residues 24-48 (IPXXXXXXXXXXXXXXXXXXXXXXX) is cleaved from the precursor. 3 cysteine pairs are disulfide-bonded: C54-C66, C58-C71, and C65-C77.

In terms of tissue distribution, expressed by the venom duct.

The protein resides in the secreted. In terms of biological role, acts as a neurotoxin by inhibiting an ion channel. The polypeptide is Turripeptide Lol6.1 (Iotyrris olangoensis (Sea snail)).